Reading from the N-terminus, the 328-residue chain is Lipoyl synthase (328 aa).

Residues C56, C61, C67, C82, C86, C89, and S298 each contribute to the [4Fe-4S] cluster site. One can recognise a Radical SAM core domain in the interval 68 to 287; the sequence is WEDREATFLI…KEEAEEIGFS (220 aa).

The protein belongs to the radical SAM superfamily. Lipoyl synthase family. [4Fe-4S] cluster is required as a cofactor.

The protein localises to the cytoplasm. It carries out the reaction [[Fe-S] cluster scaffold protein carrying a second [4Fe-4S](2+) cluster] + N(6)-octanoyl-L-lysyl-[protein] + 2 oxidized [2Fe-2S]-[ferredoxin] + 2 S-adenosyl-L-methionine + 4 H(+) = [[Fe-S] cluster scaffold protein] + N(6)-[(R)-dihydrolipoyl]-L-lysyl-[protein] + 4 Fe(3+) + 2 hydrogen sulfide + 2 5'-deoxyadenosine + 2 L-methionine + 2 reduced [2Fe-2S]-[ferredoxin]. It functions in the pathway protein modification; protein lipoylation via endogenous pathway; protein N(6)-(lipoyl)lysine from octanoyl-[acyl-carrier-protein]: step 2/2. In terms of biological role, catalyzes the radical-mediated insertion of two sulfur atoms into the C-6 and C-8 positions of the octanoyl moiety bound to the lipoyl domains of lipoate-dependent enzymes, thereby converting the octanoylated domains into lipoylated derivatives. The protein is Lipoyl synthase of Streptomyces avermitilis (strain ATCC 31267 / DSM 46492 / JCM 5070 / NBRC 14893 / NCIMB 12804 / NRRL 8165 / MA-4680).